The chain runs to 381 residues: uncharacterized protein (381 aa).

Belongs to the glycerate kinase type-1 family.

This is an uncharacterized protein from Mycobacterium tuberculosis (strain CDC 1551 / Oshkosh).